An 858-amino-acid chain; its full sequence is DNA mismatch repair protein MutS (858 aa).

An ATP-binding site is contributed by 613 to 620 (GPNMAGKS).

It belongs to the DNA mismatch repair MutS family.

Functionally, this protein is involved in the repair of mismatches in DNA. It is possible that it carries out the mismatch recognition step. This protein has a weak ATPase activity. In Dehalococcoides mccartyi (strain ATCC BAA-2266 / KCTC 15142 / 195) (Dehalococcoides ethenogenes (strain 195)), this protein is DNA mismatch repair protein MutS.